The chain runs to 60 residues: Large ribosomal subunit protein bL32 (60 aa).

Residues 1–60 (MAVQQNKKSRSARDMRRSHDALSENALSVEKTTGEVHLRHHVSPEGVYRGRKVVDKGADE) form a disordered region. Over residues 11 to 22 (SARDMRRSHDAL) the composition is skewed to basic and acidic residues.

The protein belongs to the bacterial ribosomal protein bL32 family.

The polypeptide is Large ribosomal subunit protein bL32 (Pseudomonas putida (strain ATCC 700007 / DSM 6899 / JCM 31910 / BCRC 17059 / LMG 24140 / F1)).